The primary structure comprises 185 residues: Ribosome maturation factor RimM (185 aa).

The PRC barrel domain occupies 106–185 (TGDYYWKDLI…TIEVDWDPGF (80 aa)).

It belongs to the RimM family. In terms of assembly, binds ribosomal protein uS19.

The protein resides in the cytoplasm. An accessory protein needed during the final step in the assembly of 30S ribosomal subunit, possibly for assembly of the head region. Essential for efficient processing of 16S rRNA. May be needed both before and after RbfA during the maturation of 16S rRNA. It has affinity for free ribosomal 30S subunits but not for 70S ribosomes. In Photorhabdus laumondii subsp. laumondii (strain DSM 15139 / CIP 105565 / TT01) (Photorhabdus luminescens subsp. laumondii), this protein is Ribosome maturation factor RimM.